The following is a 362-amino-acid chain: Glutamate 5-kinase (362 aa).

Lysine 3 contacts ATP. Residues serine 43, aspartate 128, and asparagine 140 each contribute to the substrate site. Residues 160-161 (TD) and 202-208 (TGGMRTK) each bind ATP. Residues 267-348 (AGAILIDDGA…REIENVLGYS (82 aa)) form the PUA domain.

It belongs to the glutamate 5-kinase family.

The protein resides in the cytoplasm. The enzyme catalyses L-glutamate + ATP = L-glutamyl 5-phosphate + ADP. The protein operates within amino-acid biosynthesis; L-proline biosynthesis; L-glutamate 5-semialdehyde from L-glutamate: step 1/2. Functionally, catalyzes the transfer of a phosphate group to glutamate to form L-glutamate 5-phosphate. The polypeptide is Glutamate 5-kinase (Xanthomonas euvesicatoria pv. vesicatoria (strain 85-10) (Xanthomonas campestris pv. vesicatoria)).